Reading from the N-terminus, the 132-residue chain is Small ribosomal subunit protein uS8 (132 aa).

It belongs to the universal ribosomal protein uS8 family. Part of the 30S ribosomal subunit. Contacts proteins S5 and S12.

One of the primary rRNA binding proteins, it binds directly to 16S rRNA central domain where it helps coordinate assembly of the platform of the 30S subunit. This Chelativorans sp. (strain BNC1) protein is Small ribosomal subunit protein uS8.